Consider the following 193-residue polypeptide: dITP/XTP pyrophosphatase (193 aa).

Serine 7–lysine 12 lines the substrate pocket. Aspartate 65 acts as the Proton acceptor in catalysis. Aspartate 65 contributes to the Mg(2+) binding site. Residues serine 66, phenylalanine 144 to aspartate 147, lysine 167, and histidine 172 to arginine 173 contribute to the substrate site.

This sequence belongs to the HAM1 NTPase family. Homodimer. It depends on Mg(2+) as a cofactor.

The catalysed reaction is XTP + H2O = XMP + diphosphate + H(+). The enzyme catalyses dITP + H2O = dIMP + diphosphate + H(+). It catalyses the reaction ITP + H2O = IMP + diphosphate + H(+). Pyrophosphatase that catalyzes the hydrolysis of nucleoside triphosphates to their monophosphate derivatives, with a high preference for the non-canonical purine nucleotides XTP (xanthosine triphosphate), dITP (deoxyinosine triphosphate) and ITP. Seems to function as a house-cleaning enzyme that removes non-canonical purine nucleotides from the nucleotide pool, thus preventing their incorporation into DNA/RNA and avoiding chromosomal lesions. This is dITP/XTP pyrophosphatase from Tropheryma whipplei (strain TW08/27) (Whipple's bacillus).